The sequence spans 559 residues: Phosphoinositide 3-phosphatase (559 aa).

The 422-residue stretch at 120 to 541 folds into the Myotubularin phosphatase domain; the sequence is SWKSFLLENE…SSLRWWSASF (422 aa). Catalysis depends on Cys-342, which acts as the Phosphocysteine intermediate.

The protein belongs to the protein-tyrosine phosphatase family. Non-receptor class myotubularin subfamily.

Its subcellular location is the cytoplasm. It catalyses the reaction a 1,2-diacyl-sn-glycero-3-phospho-(1D-myo-inositol-3-phosphate) + H2O = a 1,2-diacyl-sn-glycero-3-phospho-(1D-myo-inositol) + phosphate. In terms of biological role, lipid phosphatase which dephosphorylates phosphatidylinositol 3-monophosphate (PI3P). Involved in the control of PI3P-dependent signaling and in the maintenance of endosomal system integrity. The polypeptide is Phosphoinositide 3-phosphatase (Schizosaccharomyces pombe (strain 972 / ATCC 24843) (Fission yeast)).